A 495-amino-acid polypeptide reads, in one-letter code: Trigger factor (495 aa).

A PPIase FKBP-type domain is found at G169–V254. The interval A439 to E495 is disordered.

The protein belongs to the FKBP-type PPIase family. Tig subfamily.

Its subcellular location is the cytoplasm. The enzyme catalyses [protein]-peptidylproline (omega=180) = [protein]-peptidylproline (omega=0). Involved in protein export. Acts as a chaperone by maintaining the newly synthesized protein in an open conformation. Functions as a peptidyl-prolyl cis-trans isomerase. This is Trigger factor from Rhizobium rhizogenes (strain K84 / ATCC BAA-868) (Agrobacterium radiobacter).